A 147-amino-acid polypeptide reads, in one-letter code: Cytochrome c-type biogenesis protein CcmE (147 aa).

Topologically, residues 1–9 are cytoplasmic; sequence MKNLKKQRR. Residues 10-30 form a helical; Signal-anchor for type II membrane protein membrane-spanning segment; that stretch reads IQVIALATVALVLSTALIGYA. Over 31–147 the chain is Periplasmic; it reads MRDGINFFRA…EQGVYKGTEG (117 aa). Heme is bound by residues H123 and Y127.

Belongs to the CcmE/CycJ family.

It is found in the cell inner membrane. Heme chaperone required for the biogenesis of c-type cytochromes. Transiently binds heme delivered by CcmC and transfers the heme to apo-cytochromes in a process facilitated by CcmF and CcmH. The protein is Cytochrome c-type biogenesis protein CcmE of Roseobacter denitrificans (strain ATCC 33942 / OCh 114) (Erythrobacter sp. (strain OCh 114)).